The chain runs to 438 residues: UDP-N-acetylmuramoylalanine--D-glutamate ligase (438 aa).

ATP is bound at residue 112–118 (GSNGKST).

The protein belongs to the MurCDEF family.

The protein resides in the cytoplasm. The enzyme catalyses UDP-N-acetyl-alpha-D-muramoyl-L-alanine + D-glutamate + ATP = UDP-N-acetyl-alpha-D-muramoyl-L-alanyl-D-glutamate + ADP + phosphate + H(+). The protein operates within cell wall biogenesis; peptidoglycan biosynthesis. Cell wall formation. Catalyzes the addition of glutamate to the nucleotide precursor UDP-N-acetylmuramoyl-L-alanine (UMA). In Salmonella choleraesuis (strain SC-B67), this protein is UDP-N-acetylmuramoylalanine--D-glutamate ligase.